We begin with the raw amino-acid sequence, 376 residues long: Erythronate-4-phosphate dehydrogenase (376 aa).

Positions 45 and 67 each coordinate substrate. Asp147 is an NAD(+) binding site. Arg209 is an active-site residue. Asp233 contributes to the NAD(+) binding site. Glu238 is a catalytic residue. The active-site Proton donor is His255. Gly258 contacts NAD(+). Tyr259 is a substrate binding site.

This sequence belongs to the D-isomer specific 2-hydroxyacid dehydrogenase family. PdxB subfamily. In terms of assembly, homodimer.

It is found in the cytoplasm. It catalyses the reaction 4-phospho-D-erythronate + NAD(+) = (R)-3-hydroxy-2-oxo-4-phosphooxybutanoate + NADH + H(+). Its pathway is cofactor biosynthesis; pyridoxine 5'-phosphate biosynthesis; pyridoxine 5'-phosphate from D-erythrose 4-phosphate: step 2/5. In terms of biological role, catalyzes the oxidation of erythronate-4-phosphate to 3-hydroxy-2-oxo-4-phosphonooxybutanoate. The polypeptide is Erythronate-4-phosphate dehydrogenase (Shewanella sp. (strain MR-4)).